The sequence spans 358 residues: cAMP-dependent protein kinase catalytic subunit PRKX (358 aa).

Methionine 1 carries the N-acetylmethionine modification. The disordered stretch occupies residues 1 to 34 (MEAPGLAQAAAAESDSRKVAEETPDGAPALCPSP). The Protein kinase domain occupies 49 to 303 (FDTLATVGTG…ANDVKHHRWF (255 aa)). Residues 55-63 (VGTGTFGRV) and lysine 78 each bind ATP. Residue aspartate 172 is the Proton acceptor of the active site. Threonine 203 carries the post-translational modification Phosphothreonine. The AGC-kinase C-terminal domain occupies 304 to 358 (RSVDWEAVPQRKLKPPIVPKIAGDGDTSNFETYPENDWDTAAPVPQKDLEIFKNF).

The protein belongs to the protein kinase superfamily. AGC Ser/Thr protein kinase family. cAMP subfamily. As to quaternary structure, like other cAMP-dependent protein kinases, the inactive holoenzyme is probably composed of 2 PRKX catalytic subunits and a dimer of regulatory subunits. Interacts (cAMP-dependent) specifically with the regulatory subunits PRKAR1A and PRKAR1B. Compared to other cAMP-dependent serine/threonine protein kinases, does not interact with the 2 other PKA regulatory subunits PRKAR2A and PRKAR2B. Interacts with cAMP-dependent protein kinase inhibitor/PKI proteins; inhibits PRKX. Interacts with GPKOW. Interacts with SMAD6. Interacts with PKD1; involved in differentiation and controlled morphogenesis of the kidney. Interacts with PIN1 (via WW domain). Post-translationally, phosphorylated; autophosphorylates in vitro. Widely expressed (at protein level). Specifically expressed in blood by macrophages and granulocytes according to PubMed:9860982.

It localises to the cytoplasm. Its subcellular location is the nucleus. The enzyme catalyses L-seryl-[protein] + ATP = O-phospho-L-seryl-[protein] + ADP + H(+). It carries out the reaction L-threonyl-[protein] + ATP = O-phospho-L-threonyl-[protein] + ADP + H(+). With respect to regulation, binding of cAMP to the PRKAR1A or PRKAR1B regulatory subunits induces dissociation of the holoenzyme heterotetramer. The released monomeric PRKX is then active and able to phosphorylate its substrates. Its function is as follows. Serine/threonine protein kinase regulated by and mediating cAMP signaling in cells. Acts through phosphorylation of downstream targets that may include CREB, SMAD6 and PKD1 and has multiple functions in cellular differentiation and epithelial morphogenesis. Regulates myeloid cell differentiation through SMAD6 phosphorylation. Involved in nephrogenesis by stimulating renal epithelial cell migration and tubulogenesis. Also involved in angiogenesis through stimulation of endothelial cell proliferation, migration and vascular-like structure formation. The polypeptide is cAMP-dependent protein kinase catalytic subunit PRKX (PRKX) (Homo sapiens (Human)).